Reading from the N-terminus, the 195-residue chain is Small ribosomal subunit protein uS4c (195 aa).

Residues 82–143 (MRLDNILFRL…KQRSKALIQN (62 aa)) enclose the S4 RNA-binding domain.

Belongs to the universal ribosomal protein uS4 family. Part of the 30S ribosomal subunit. Contacts protein S5. The interaction surface between S4 and S5 is involved in control of translational fidelity.

Its subcellular location is the plastid. It localises to the chloroplast. One of the primary rRNA binding proteins, it binds directly to 16S rRNA where it nucleates assembly of the body of the 30S subunit. Functionally, with S5 and S12 plays an important role in translational accuracy. This Pillansia templemannii protein is Small ribosomal subunit protein uS4c (rps4).